The sequence spans 209 residues: High frequency lysogenization protein HflD homolog (209 aa).

Belongs to the HflD family.

It localises to the cytoplasm. It is found in the cell inner membrane. The polypeptide is High frequency lysogenization protein HflD homolog (Saccharophagus degradans (strain 2-40 / ATCC 43961 / DSM 17024)).